Consider the following 70-residue polypeptide: Small ribosomal subunit protein bS21B (70 aa).

Belongs to the bacterial ribosomal protein bS21 family.

The sequence is that of Small ribosomal subunit protein bS21B (rpsU2) from Rhizobium meliloti (strain 1021) (Ensifer meliloti).